We begin with the raw amino-acid sequence, 141 residues long: Small ribosomal subunit protein bS6 (141 aa).

Residues 97 to 141 (TGQSEMLKAEENRSERRERRDRPEHSDSADGDDGDNSDVSDNADE) form a disordered region. A compositionally biased stretch (basic and acidic residues) spans 103–124 (LKAEENRSERRERRDRPEHSDS). The segment covering 125-141 (ADGDDGDNSDVSDNADE) has biased composition (acidic residues).

This sequence belongs to the bacterial ribosomal protein bS6 family.

Functionally, binds together with bS18 to 16S ribosomal RNA. The protein is Small ribosomal subunit protein bS6 of Pseudomonas syringae pv. syringae (strain B728a).